We begin with the raw amino-acid sequence, 413 residues long: Chloramphenicol resistance protein CraA (413 aa).

Helical transmembrane passes span leucine 18–isoleucine 38, tryptophan 55–glycine 75, lysine 84–threonine 104, phenylalanine 110–alanine 130, leucine 147–isoleucine 167, valine 170–leucine 190, alanine 228–valine 248, leucine 260–isoleucine 280, valine 289–tryptophan 309, tyrosine 312–phenylalanine 332, threonine 349–valine 369, and tyrosine 373–phenylalanine 393.

Belongs to the major facilitator superfamily.

The protein localises to the cell inner membrane. Its function is as follows. Efflux pump that mediates resistance to chloramphenicol. The sequence is that of Chloramphenicol resistance protein CraA from Acinetobacter baumannii (strain ATCC 19606 / DSM 30007 / JCM 6841 / CCUG 19606 / CIP 70.34 / NBRC 109757 / NCIMB 12457 / NCTC 12156 / 81).